The sequence spans 718 residues: MNYYKESYYTNRELSWLDFNYRVLDEARDKDNPLLERVRFLGITQSNLDEFFTVRVASLRKLMSVNYTKPDPAGLTAADQVSAISDKAHEMVKRQYNTLNRSLLPLLEQHAIHLLSMADLNEEQHAFVKNYFDDELYPALTPMADDSSRPFPFIGNNTLNIALRIYKNGDKKDRKFATVQVPDVFPRVVVLPGAPNQFILIEEIIKAFVGSLFINYTVKETSCYRVMRDLDLDVAEEDTSDLLKEVQKQLKMRERGKVMRLEVEKSMSKHQRTRLAKALGINESALYVINGPLNLTFLSKLVKAVQGHEDLNYPKYHAYYPAKYRERSIFDLIKDHDILMQYPYDDFKPVVDFIHEAAEDEDVLAIKMTLYRVSADSPIIKYLGQAAQNGKQVTVLVEVKARFDEENNVHWAKKLEEMGCHVIYGLIGLKTHCKLALVVRRENEGIKRYMHMGTGNYNDVTAHFYTDMGLFTADTDMGIDASNIFNMLSGYSEPPYFHKLHISPDGIRDFINEKLDDEIAIAKAGQPAVVKMKMNSLSDPQIISKLYEASHAGVKIQLIIRGICCLRTGIKGISDNIEVHSIIGRLLEHSRIYYFSNDGEPQIYLSSADMMTRNLNRRVELLFPLLQPEISHRAMTIFETMWADTVKTRILQPDNTYARVDGRGLEVLDSQAEFIREAEQAVKADHGDTTPTSNAHQFIPMMSPKNEPDASDLDREDD.

Residue asparagine 47 coordinates ATP. 2 residues coordinate Mg(2+): arginine 372 and arginine 402. Histidine 432 serves as the catalytic Phosphohistidine intermediate. Tyrosine 465, arginine 561, and histidine 589 together coordinate ATP. The segment at 683–718 (KADHGDTTPTSNAHQFIPMMSPKNEPDASDLDREDD) is disordered. Residues 709–718 (DASDLDREDD) are compositionally biased toward acidic residues.

Belongs to the polyphosphate kinase 1 (PPK1) family. Requires Mg(2+) as cofactor. An intermediate of this reaction is the autophosphorylated ppk in which a phosphate is covalently linked to a histidine residue through a N-P bond.

It catalyses the reaction [phosphate](n) + ATP = [phosphate](n+1) + ADP. Functionally, catalyzes the reversible transfer of the terminal phosphate of ATP to form a long-chain polyphosphate (polyP). This chain is Polyphosphate kinase, found in Lactiplantibacillus plantarum (strain ATCC BAA-793 / NCIMB 8826 / WCFS1) (Lactobacillus plantarum).